The chain runs to 328 residues: Leucine carboxyl methyltransferase 1 (328 aa).

Residues R81, G105, D128, 175–177 (DLN), and E201 each bind S-adenosyl-L-methionine.

This sequence belongs to the methyltransferase superfamily. LCMT family.

The enzyme catalyses [phosphatase 2A protein]-C-terminal L-leucine + S-adenosyl-L-methionine = [phosphatase 2A protein]-C-terminal L-leucine methyl ester + S-adenosyl-L-homocysteine. Its activity is regulated as follows. Inhibited by S-adenosyl-L-homocysteine. Methylates the carboxyl group of the C-terminal leucine residue of protein phosphatase 2A catalytic subunits to form alpha-leucine ester residues. Acts on the two major protein phosphatase 2A catalytic subunits, PPH21 and PPH22. This is Leucine carboxyl methyltransferase 1 (PPM1) from Saccharomyces cerevisiae (strain ATCC 204508 / S288c) (Baker's yeast).